Reading from the N-terminus, the 713-residue chain is uncharacterized protein (713 aa).

The helical transmembrane segment at V686–F706 threads the bilayer.

It belongs to the plectrovirus ORF1 family.

The protein localises to the host membrane. This is an uncharacterized protein from Spiroplasma melliferum (SpV1).